A 160-amino-acid chain; its full sequence is E3 ubiquitin ligase complex SCF subunit sconC (160 aa).

The segment at 101 to 160 (ILAANYLDIKALLDVGCKTVANMIKGKSPEEIRKTFNIQNDFTPEEEDQIRRENEWAEDR) is interaction with the F-box domain of F-box proteins.

The protein belongs to the SKP1 family. Component of the SCF (SKP1-CUL1-F-box protein) E3 ubiquitin ligase complexes.

It functions in the pathway protein modification; protein ubiquitination. Functionally, essential component of the SCF (SKP1-CUL1-F-box protein) E3 ubiquitin ligase complexes, which mediate the ubiquitination and subsequent proteasomal degradation of target proteins. Controls sulfur metabolite repression, probably by mediating the inactivation or degradation of the metR transcription factor. The protein is E3 ubiquitin ligase complex SCF subunit sconC (sconC) of Talaromyces marneffei (strain ATCC 18224 / CBS 334.59 / QM 7333) (Penicillium marneffei).